Consider the following 330-residue polypeptide: Ribose-phosphate pyrophosphokinase (330 aa).

55 to 57 contributes to the ATP binding site; sequence DGE. The Mg(2+) site is built by His-148 and Asp-187. Lys-211 is an active-site residue. D-ribose 5-phosphate-binding positions include Arg-213, Asp-237, and 241–245; that span reads DTGGT.

This sequence belongs to the ribose-phosphate pyrophosphokinase family. Class I subfamily. As to quaternary structure, homohexamer. Requires Mg(2+) as cofactor.

The protein resides in the cytoplasm. It catalyses the reaction D-ribose 5-phosphate + ATP = 5-phospho-alpha-D-ribose 1-diphosphate + AMP + H(+). It participates in metabolic intermediate biosynthesis; 5-phospho-alpha-D-ribose 1-diphosphate biosynthesis; 5-phospho-alpha-D-ribose 1-diphosphate from D-ribose 5-phosphate (route I): step 1/1. Its function is as follows. Involved in the biosynthesis of the central metabolite phospho-alpha-D-ribosyl-1-pyrophosphate (PRPP) via the transfer of pyrophosphoryl group from ATP to 1-hydroxyl of ribose-5-phosphate (Rib-5-P). The polypeptide is Ribose-phosphate pyrophosphokinase (Nostoc sp. (strain PCC 7120 / SAG 25.82 / UTEX 2576)).